The following is a 269-amino-acid chain: Hydroxyethylthiazole kinase (269 aa).

Position 42 (Met42) interacts with substrate. The ATP site is built by Arg118 and Ser164. Gly191 is a binding site for substrate.

This sequence belongs to the Thz kinase family. The cofactor is Mg(2+).

It catalyses the reaction 5-(2-hydroxyethyl)-4-methylthiazole + ATP = 4-methyl-5-(2-phosphooxyethyl)-thiazole + ADP + H(+). It functions in the pathway cofactor biosynthesis; thiamine diphosphate biosynthesis; 4-methyl-5-(2-phosphoethyl)-thiazole from 5-(2-hydroxyethyl)-4-methylthiazole: step 1/1. Its function is as follows. Catalyzes the phosphorylation of the hydroxyl group of 4-methyl-5-beta-hydroxyethylthiazole (THZ). The protein is Hydroxyethylthiazole kinase of Listeria monocytogenes serotype 4b (strain F2365).